Here is a 280-residue protein sequence, read N- to C-terminus: Beta-glucosyl-HMC-alpha-glucosyl-transferase (280 aa).

Its pathway is genetic information processing; DNA modification. In terms of biological role, transfers a gentiobiosyl-group on a hydroxymethylcytosine residue in DNA. Is involved in a DNA modification process to protects the phage genome against its own nucleases and the host restriction endonuclease system. In Enterobacteria phage T2 (Bacteriophage T2), this protein is Beta-glucosyl-HMC-alpha-glucosyl-transferase.